We begin with the raw amino-acid sequence, 242 residues long: UPF0173 metal-dependent hydrolase Rxyl_1261 (242 aa).

This sequence belongs to the UPF0173 family.

The sequence is that of UPF0173 metal-dependent hydrolase Rxyl_1261 from Rubrobacter xylanophilus (strain DSM 9941 / JCM 11954 / NBRC 16129 / PRD-1).